A 490-amino-acid polypeptide reads, in one-letter code: COP9 signalosome complex subunit 2 (490 aa).

A compositionally biased stretch (acidic residues) spans 1–30 (MSDDDFMQDSDQEYDFEYEDDEEEDTGDVD). The disordered stretch occupies residues 1 to 32 (MSDDDFMQDSDQEYDFEYEDDEEEDTGDVDIE). A PCI domain is found at 250–418 (SEENWKEAQS…GVLELESRED (169 aa)). Residues 469 to 490 (DTMRSMGSGKRGRRVGLTQRAY) form a disordered region.

It belongs to the CSN2 family. In terms of assembly, component of the COP9 signalosome (CSN) complex.

Its subcellular location is the cytoplasm. It is found in the nucleus. In terms of biological role, component of the COP9 signalosome (CSN) complex that acts as an regulator of the ubiquitin (Ubl) conjugation pathway by mediating the deneddylation of the cullin subunit of SCF-type E3 ubiquitin-protein ligase complexes. The CSN complex is involved in the regulation of the circadian clock through its control of the stability of the SCF(FWD-1) complex. This chain is COP9 signalosome complex subunit 2 (csn-2), found in Neurospora crassa (strain ATCC 24698 / 74-OR23-1A / CBS 708.71 / DSM 1257 / FGSC 987).